The following is a 1193-amino-acid chain: uncharacterized protein (1193 aa).

The signal sequence occupies residues 1–25; that stretch reads MKIKFINYLLLFFIIFLNYNGFVKS. Residues 26–1172 lie on the Extracellular side of the membrane; sequence DCYQELDLVL…PQDPSDELST (1147 aa). 18 N-linked (GlcNAc...) asparagine glycosylation sites follow: asparagine 90, asparagine 183, asparagine 226, asparagine 265, asparagine 281, asparagine 345, asparagine 357, asparagine 436, asparagine 516, asparagine 552, asparagine 583, asparagine 627, asparagine 712, asparagine 765, asparagine 822, asparagine 938, asparagine 1038, and asparagine 1092. Residues 1173–1193 form a helical membrane-spanning segment; sequence SSFVQVNLLFLSILIFTIFIF.

The protein localises to the membrane. This is an uncharacterized protein from Dictyostelium discoideum (Social amoeba).